The primary structure comprises 142 residues: Large ribosomal subunit protein uL13 (142 aa).

Belongs to the universal ribosomal protein uL13 family. Part of the 50S ribosomal subunit.

This protein is one of the early assembly proteins of the 50S ribosomal subunit, although it is not seen to bind rRNA by itself. It is important during the early stages of 50S assembly. The polypeptide is Large ribosomal subunit protein uL13 (Haemophilus influenzae (strain PittGG)).